Consider the following 198-residue polypeptide: Pyridoxine/pyridoxamine 5'-phosphate oxidase (198 aa).

FMN-binding positions include 47–52 (RMVLVK), 62–63 (FT), arginine 68, lysine 69, and glutamine 91. Lysine 52 lines the substrate pocket. Substrate contacts are provided by tyrosine 109, arginine 113, and serine 117. FMN-binding positions include 126 to 127 (QS) and tryptophan 171. A substrate-binding site is contributed by 177-179 (RLH). Arginine 181 contributes to the FMN binding site.

This sequence belongs to the pyridoxamine 5'-phosphate oxidase family. As to quaternary structure, homodimer. FMN is required as a cofactor.

The catalysed reaction is pyridoxamine 5'-phosphate + O2 + H2O = pyridoxal 5'-phosphate + H2O2 + NH4(+). It carries out the reaction pyridoxine 5'-phosphate + O2 = pyridoxal 5'-phosphate + H2O2. The protein operates within cofactor metabolism; pyridoxal 5'-phosphate salvage; pyridoxal 5'-phosphate from pyridoxamine 5'-phosphate: step 1/1. Its pathway is cofactor metabolism; pyridoxal 5'-phosphate salvage; pyridoxal 5'-phosphate from pyridoxine 5'-phosphate: step 1/1. Catalyzes the oxidation of either pyridoxine 5'-phosphate (PNP) or pyridoxamine 5'-phosphate (PMP) into pyridoxal 5'-phosphate (PLP). This Anaeromyxobacter dehalogenans (strain 2CP-C) protein is Pyridoxine/pyridoxamine 5'-phosphate oxidase.